The chain runs to 413 residues: Serine hydroxymethyltransferase (413 aa).

(6S)-5,6,7,8-tetrahydrofolate-binding positions include L117 and 121 to 123; that span reads GHL. An N6-(pyridoxal phosphate)lysine modification is found at K226. (6S)-5,6,7,8-tetrahydrofolate is bound by residues E239 and 349–351; that span reads SPF.

The protein belongs to the SHMT family. In terms of assembly, homodimer. It depends on pyridoxal 5'-phosphate as a cofactor.

It is found in the cytoplasm. The enzyme catalyses (6R)-5,10-methylene-5,6,7,8-tetrahydrofolate + glycine + H2O = (6S)-5,6,7,8-tetrahydrofolate + L-serine. It functions in the pathway one-carbon metabolism; tetrahydrofolate interconversion. It participates in amino-acid biosynthesis; glycine biosynthesis; glycine from L-serine: step 1/1. Its function is as follows. Catalyzes the reversible interconversion of serine and glycine with tetrahydrofolate (THF) serving as the one-carbon carrier. This reaction serves as the major source of one-carbon groups required for the biosynthesis of purines, thymidylate, methionine, and other important biomolecules. Also exhibits THF-independent aldolase activity toward beta-hydroxyamino acids, producing glycine and aldehydes, via a retro-aldol mechanism. This is Serine hydroxymethyltransferase from Bacillus cytotoxicus (strain DSM 22905 / CIP 110041 / 391-98 / NVH 391-98).